The following is a 653-amino-acid chain: Mediator of RNA polymerase II transcription subunit 17 (653 aa).

The tract at residues 246–271 (SNESDEHIDSTTGHDIPGTSEKLSAS) is disordered.

Belongs to the Mediator complex subunit 17 family. In terms of assembly, component of the Mediator complex.

The protein resides in the nucleus. Its function is as follows. Component of the Mediator complex, a coactivator involved in the regulated transcription of nearly all RNA polymerase II-dependent genes. Mediator functions as a bridge to convey information from gene-specific regulatory proteins to the basal RNA polymerase II transcription machinery. The Mediator complex, having a compact conformation in its free form, is recruited to promoters by direct interactions with regulatory proteins and serves for the assembly of a functional preinitiation complex with RNA polymerase II and the general transcription factors. This is Mediator of RNA polymerase II transcription subunit 17 (MED17) from Arabidopsis thaliana (Mouse-ear cress).